The primary structure comprises 466 residues: Ribulose bisphosphate carboxylase large chain (466 aa).

The residue at position 5 (K5) is an N6,N6,N6-trimethyllysine. N114 and T164 together coordinate substrate. K166 serves as the catalytic Proton acceptor. K168 is a substrate binding site. Mg(2+) is bound by residues K192, D194, and E195. K192 is subject to N6-carboxylysine. H285 functions as the Proton acceptor in the catalytic mechanism. The substrate site is built by R286, H318, and S370.

The protein belongs to the RuBisCO large chain family. Type I subfamily. Heterohexadecamer of 8 large chains and 8 small chains; disulfide-linked. The disulfide link is formed within the large subunit homodimers. It depends on Mg(2+) as a cofactor. Post-translationally, the disulfide bond which can form in the large chain dimeric partners within the hexadecamer appears to be associated with oxidative stress and protein turnover.

The protein localises to the plastid. It is found in the chloroplast. It carries out the reaction 2 (2R)-3-phosphoglycerate + 2 H(+) = D-ribulose 1,5-bisphosphate + CO2 + H2O. The catalysed reaction is D-ribulose 1,5-bisphosphate + O2 = 2-phosphoglycolate + (2R)-3-phosphoglycerate + 2 H(+). In terms of biological role, ruBisCO catalyzes two reactions: the carboxylation of D-ribulose 1,5-bisphosphate, the primary event in carbon dioxide fixation, as well as the oxidative fragmentation of the pentose substrate in the photorespiration process. Both reactions occur simultaneously and in competition at the same active site. In Betula nigra (River birch), this protein is Ribulose bisphosphate carboxylase large chain.